The sequence spans 277 residues: Large ribosomal subunit protein uL2 (277 aa).

The tract at residues 222–277 (GVAMNPVDHPHGGGEGRTSGGRHPVTPWGKPTKGKKTRSNKATDKFIMRSRHQRKK) is disordered.

This sequence belongs to the universal ribosomal protein uL2 family. Part of the 50S ribosomal subunit. Forms a bridge to the 30S subunit in the 70S ribosome.

Functionally, one of the primary rRNA binding proteins. Required for association of the 30S and 50S subunits to form the 70S ribosome, for tRNA binding and peptide bond formation. It has been suggested to have peptidyltransferase activity; this is somewhat controversial. Makes several contacts with the 16S rRNA in the 70S ribosome. This Brucella canis (strain ATCC 23365 / NCTC 10854 / RM-666) protein is Large ribosomal subunit protein uL2.